A 276-amino-acid polypeptide reads, in one-letter code: Phosphatidylcholine synthase (276 aa).

Over 1–30 (MGGQKEMADSVKTKLTGKLKAKKVTAPQAK) the chain is Cytoplasmic. The helical transmembrane segment at 31-51 (AFSVHLLTASGSFLAFLSVVA) threads the bilayer. At 52–57 (ASDGRY) the chain is on the periplasmic side. The chain crosses the membrane as a helical span at residues 58 to 78 (TAMWWWLGLALFVDGIDGPIA). Residues 79-91 (RKLEVKYVLPNWS) are Cytoplasmic-facing. Residues 92–112 (GELLDSIIDYVTYVLIPAFAL) traverse the membrane as a helical segment. Residues 113 to 115 (YQS) lie on the Periplasmic side of the membrane. Residues 116–136 (GFMGTNLSFISGAIIVVSSAI) form a helical membrane-spanning segment. At 137 to 146 (YYADTGMKTK) the chain is on the cytoplasmic side. The helical transmembrane segment at 147–167 (ENFFKGFPVVWNMVVFTLFIV) threads the bilayer. The Periplasmic portion of the chain corresponds to 168-171 (RPGE). A helical transmembrane segment spans residues 172 to 192 (WVAFGTVVASAILSFLPINFL). At 193 to 202 (HPVRVVRLRP) the chain is on the cytoplasmic side. The helical transmembrane segment at 203–223 (LNLTIFLLWCAFGVIALYYML) threads the bilayer. The Periplasmic segment spans residues 224 to 230 (DAPLWVR). A helical membrane pass occupies residues 231 to 251 (IGISVTGLYIYFIGAIMQLFP). Over 252 to 276 (SLGREAALAKARKLVEKQQKSGEAP) the chain is Cytoplasmic.

This sequence belongs to the CDP-alcohol phosphatidyltransferase class-I family. Mn(2+) is required as a cofactor.

The protein resides in the cell inner membrane. It carries out the reaction a CDP-1,2-diacyl-sn-glycerol + choline = a 1,2-diacyl-sn-glycero-3-phosphocholine + CMP + H(+). Condenses choline with CDP-diglyceride to produce phosphatidylcholine and CMP. The sequence is that of Phosphatidylcholine synthase from Brucella melitensis biotype 1 (strain ATCC 23456 / CCUG 17765 / NCTC 10094 / 16M).